The following is a 428-amino-acid chain: Cell number regulator 13 (428 aa).

Over residues 233–280 (PEKETNVKAPEKKGSNYSESKGETAKSFDDDDDYPKKQNGDYPKKQKD) the composition is skewed to basic and acidic residues. Residues 233 to 290 (PEKETNVKAPEKKGSNYSESKGETAKSFDDDDDYPKKQNGDYPKKQKDTCSTQRCSSQ) are disordered. Residues 281–290 (TCSTQRCSSQ) show a composition bias toward polar residues. Residues 354-370 (IMAYSLILSCCCYTCCV) form a helical membrane-spanning segment.

Expressed in roots, coleoptiles, leaves, stalks, apical meristems, immature ears, embryos, endosperm, pericarp, silks and tassel spikelets. Not detected in pollen.

It localises to the membrane. In Zea mays (Maize), this protein is Cell number regulator 13 (CNR13).